A 156-amino-acid polypeptide reads, in one-letter code: Protein archease-like (156 aa).

Ca(2+)-binding residues include Asp25, Asp155, and Ile156.

This sequence belongs to the archease family.

Component of the tRNA-splicing ligase complex required to facilitate the enzymatic turnover of catalytic subunit RtcB. Plays an important role in a RNA repair and splicing pathway which controls axon regeneration in response to peripheral (PNS) and central nervous system (CNS) injury, by activating splicing of Xbp1 to promote axon regeneration in response to axotomy. In Drosophila melanogaster (Fruit fly), this protein is Protein archease-like.